The chain runs to 3343 residues: Cadherin-3 (3343 aa).

The signal sequence occupies residues 1–26 (MTIRIFFSIFLLNHLIFFHLFNFTHQ). An N-linked (GlcNAc...) asparagine glycan is attached at asparagine 22. Over 27–3228 (FSEETIKFSV…LFSNFSNTTT (3202 aa)) the chain is Extracellular. 3 Cadherin domains span residues 28 to 117 (SEET…SPIF), 118 to 229 (PIDV…PPNF), and 242 to 330 (PNTK…EPNI). N-linked (GlcNAc...) asparagine glycans are attached at residues asparagine 149, asparagine 250, asparagine 288, asparagine 369, asparagine 467, and asparagine 612. Residues 632-738 (ICQITEIHVL…EDVNDNVPKF (107 aa)) enclose the Cadherin 4 domain. N-linked (GlcNAc...) asparagine glycans are attached at residues asparagine 752, asparagine 806, asparagine 941, asparagine 966, asparagine 970, asparagine 985, asparagine 1042, asparagine 1335, asparagine 1425, asparagine 1429, asparagine 1557, asparagine 1563, asparagine 1597, asparagine 1624, asparagine 1695, and asparagine 1702. One can recognise a Cadherin 5 domain in the interval 1279-1368 (RENELMFEIE…ADVNDNKPKI (90 aa)). Cadherin domains follow at residues 1545–1648 (DKAA…APRF), 1676–1756 (AEDL…TPEF), and 1757–1857 (ELSS…HPMI). N-linked (GlcNAc...) asparagine glycans are attached at residues asparagine 1895 and asparagine 1900. 3 Cadherin domains span residues 1954–2045 (TVSV…SPRF), 2046–2145 (DQQL…NAPR), and 2146–2245 (FSRI…APIF). N-linked (GlcNAc...) asparagine glycosylation is found at asparagine 2053, asparagine 2129, asparagine 2203, asparagine 2382, asparagine 2391, asparagine 2410, asparagine 2414, asparagine 2431, asparagine 2527, asparagine 2530, asparagine 2564, asparagine 2621, asparagine 2665, asparagine 2712, asparagine 2798, asparagine 2809, asparagine 2927, asparagine 2976, and asparagine 3045. Positions 3040-3205 (EISVRNGTSH…SSTGTSRNEC (166 aa)) constitute a Laminin G-like domain. Cysteine 3172 and cysteine 3205 are joined by a disulfide. Residues asparagine 3222 and asparagine 3225 are each glycosylated (N-linked (GlcNAc...) asparagine). Residues 3229–3250 (LILLITLALISLIGFSVCLLAI) form a helical membrane-spanning segment. Topologically, residues 3251-3343 (RRRWRQKSPG…RDGHINMAYL (93 aa)) are cytoplasmic. A disordered region spans residues 3257 to 3277 (KSPGDQKQTERSNGWTGHVMP).

In terms of tissue distribution, expressed in the anchor cell.

Its subcellular location is the cell membrane. The protein localises to the basolateral cell membrane. It is found in the cell junction. Its function is as follows. Cell adhesion protein involved in the control of epithelial morphogenesis. Together with metalloproteinase zmp-1 and hemicentin him-4, plays a role in anchor cell (AC) invasion during postembryonic vulval development. This Caenorhabditis elegans protein is Cadherin-3 (cdh-3).